A 721-amino-acid chain; its full sequence is Transcription activator of gluconeogenesis ARB_05058 (721 aa).

A compositionally biased stretch (polar residues) spans 1-34; the sequence is MSPHQTTGQESDNMTVNGENAQASSQYIQSNEEM. Positions 1–62 are disordered; that stretch reads MSPHQTTGQE…PSRPKRKKAK (62 aa). Basic and acidic residues predominate over residues 40 to 55; it reads TEKKASTAKAAKDPSR. A DNA-binding region (zn(2)-C6 fungal-type) is located at residues 65 to 93; it reads CYACQRGHLTCGDERPCQRCIKRGFQDAC. 5 disordered regions span residues 128-224, 263-300, 353-400, 533-567, and 635-666; these read QNNA…FNSA, GDTP…SNQA, SPAS…TPQL, NHNV…YNSS, and GLNG…QRRW. Composition is skewed to polar residues over residues 133–213, 267–277, 287–300, and 361–379; these read GSNT…TPSA, PSESGAQRGSI, LTGS…SNQA, and MMTT…GAFN. 2 stretches are compositionally biased toward low complexity: residues 380-399 and 543-553; these read SRQN…STPQ and GLMTGSTSRGS. Positions 640 to 661 are enriched in polar residues; the sequence is AASNETNELNGSLTNGATTNGR.

Belongs to the ERT1/acuK family.

The protein resides in the nucleus. Functionally, transcription factor which regulates nonfermentable carbon utilization. Activator of gluconeogenetic genes. This is Transcription activator of gluconeogenesis ARB_05058 from Arthroderma benhamiae (strain ATCC MYA-4681 / CBS 112371) (Trichophyton mentagrophytes).